We begin with the raw amino-acid sequence, 772 residues long: Acylamino-acid-releasing enzyme 2 (772 aa).

Active-site charge relay system residues include Ser617, Asp708, and His740.

It belongs to the peptidase S9C family. Homotetramer.

The protein localises to the cytoplasm. It carries out the reaction Cleavage of an N-acetyl or N-formyl amino acid from the N-terminus of a polypeptide.. In terms of biological role, catalyzes the hydrolysis of the N-terminal peptide bond of an N-acetylated peptide to generate an N-acetylated amino acid and a peptide with a free N-terminus. The polypeptide is Acylamino-acid-releasing enzyme 2 (Oryza sativa subsp. japonica (Rice)).